Reading from the N-terminus, the 131-residue chain is Sec-independent protein translocase protein TatB (131 aa).

Residues F2–G22 form a helical membrane-spanning segment. Residues D90–T131 are disordered. Residues D96–D106 are compositionally biased toward basic and acidic residues.

The protein belongs to the TatB family. The Tat system comprises two distinct complexes: a TatABC complex, containing multiple copies of TatA, TatB and TatC subunits, and a separate TatA complex, containing only TatA subunits. Substrates initially bind to the TatABC complex, which probably triggers association of the separate TatA complex to form the active translocon.

It localises to the cell membrane. Functionally, part of the twin-arginine translocation (Tat) system that transports large folded proteins containing a characteristic twin-arginine motif in their signal peptide across membranes. Together with TatC, TatB is part of a receptor directly interacting with Tat signal peptides. TatB may form an oligomeric binding site that transiently accommodates folded Tat precursor proteins before their translocation. The protein is Sec-independent protein translocase protein TatB of Mycobacterium bovis (strain ATCC BAA-935 / AF2122/97).